A 565-amino-acid polypeptide reads, in one-letter code: MAQRIFTLILLLCSTSVFAGLFDAPGRSQFVPADQAFAFDFQQNQHDLNLTWQIKDGYYLYRKQIRITPEHAKIADVQLPQGVWHEDEFYGKSEIYRDRLTLPVTINQASAGATLTVTYQGCADAGFCYPPETKTVPLSEVVANNEASQPVSVPQQEQPTAQLPFSALWALLIGIGIAFTPCVLPMYPLISGIVLGGKQRLSTARALLLTFIYVQGMALTYTALGLVVAAAGLQFQAALQHPYVLIGLAIVFTLLAMSMFGLFTLQLPSSLQTRLTLMSNRQQGGSPGGVFIMGAIAGLICSPCTTAPLSAILLYIAQSGNMWLGGGTLYLYALGMGLPLMLITVFGNRLLPKSGPWMEQVKTAFGFVILALPVFLLERVIGDIWGLRLWSALGVAFFGWAFITSLQAKRGWMRVVQIILLAAALVSVRPLQDWAFGETHTAQTQTHLNFTQIKTVDELNQALVEAKGKPVMLDLYADWCVACKEFEKYTFSDPQVQKALADTVLLQANVTANDAQDVALLKHLNVLGLPTILFFDGQGQEHPQARVTGFMDAETFSAHLRDRQP.

The signal sequence occupies residues 1-19 (MAQRIFTLILLLCSTSVFA). Disulfide bonds link C122–C128 and C182–C304. A run of 7 helical transmembrane segments spans residues 163-183 (LPFSALWALLIGIGIAFTPCV), 208-228 (LLTFIYVQGMALTYTALGLVV), 243-263 (YVLIGLAIVFTLLAMSMFGLF), 289-309 (GVFIMGAIAGLICSPCTTAPL), 323-343 (WLGGGTLYLYALGMGLPLMLI), 357-377 (WMEQVKTAFGFVILALPVFLL), and 384-404 (IWGLRLWSALGVAFFGWAFIT). The 132-residue stretch at 434–565 (WAFGETHTAQ…FSAHLRDRQP (132 aa)) folds into the Thioredoxin domain. A disulfide bond links C480 and C483.

Belongs to the thioredoxin family. DsbD subfamily.

Its subcellular location is the cell inner membrane. It catalyses the reaction [protein]-dithiol + NAD(+) = [protein]-disulfide + NADH + H(+). It carries out the reaction [protein]-dithiol + NADP(+) = [protein]-disulfide + NADPH + H(+). Its function is as follows. Required to facilitate the formation of correct disulfide bonds in some periplasmic proteins and for the assembly of the periplasmic c-type cytochromes. Acts by transferring electrons from cytoplasmic thioredoxin to the periplasm. This transfer involves a cascade of disulfide bond formation and reduction steps. This Escherichia coli O6:K15:H31 (strain 536 / UPEC) protein is Thiol:disulfide interchange protein DsbD.